The sequence spans 168 residues: MSEQKQDVAATEQQPVLQIQRIYVKDVSFEAPNLPHIFQQEWKPKLGFDLSTETTQVGDDLYEVVLNISVETTLEDSGDVAFICEVKQAGVFTISGLEDVQMAHCLTSQCPNMLFPYARELVSNLVNRGTFPALNLSPVNFDALFVEYMNRQQAENAEEKSEEEQTKH.

The protein belongs to the SecB family. In terms of assembly, homotetramer, a dimer of dimers. One homotetramer interacts with 1 SecA dimer.

It localises to the cytoplasm. In terms of biological role, one of the proteins required for the normal export of preproteins out of the cell cytoplasm. It is a molecular chaperone that binds to a subset of precursor proteins, maintaining them in a translocation-competent state. It also specifically binds to its receptor SecA. The polypeptide is Protein-export protein SecB (Haemophilus influenzae (strain PittGG)).